The primary structure comprises 366 residues: tRNA-specific 2-thiouridylase MnmA (366 aa).

ATP contacts are provided by residues 6–13 (GLSGGVDS) and Met32. The Nucleophile role is filled by Cys96. Residues Cys96 and Cys196 are joined by a disulfide bond. Gly120 lines the ATP pocket. The segment at 146–148 (KDQ) is interaction with tRNA. The active-site Cysteine persulfide intermediate is Cys196. The interaction with tRNA stretch occupies residues 302–303 (RY).

The protein belongs to the MnmA/TRMU family.

It localises to the cytoplasm. It carries out the reaction S-sulfanyl-L-cysteinyl-[protein] + uridine(34) in tRNA + AH2 + ATP = 2-thiouridine(34) in tRNA + L-cysteinyl-[protein] + A + AMP + diphosphate + H(+). Catalyzes the 2-thiolation of uridine at the wobble position (U34) of tRNA, leading to the formation of s(2)U34. The sequence is that of tRNA-specific 2-thiouridylase MnmA from Treponema denticola (strain ATCC 35405 / DSM 14222 / CIP 103919 / JCM 8153 / KCTC 15104).